The chain runs to 204 residues: Imidazoleglycerol-phosphate dehydratase (204 aa).

Belongs to the imidazoleglycerol-phosphate dehydratase family.

The protein localises to the cytoplasm. It catalyses the reaction D-erythro-1-(imidazol-4-yl)glycerol 3-phosphate = 3-(imidazol-4-yl)-2-oxopropyl phosphate + H2O. It functions in the pathway amino-acid biosynthesis; L-histidine biosynthesis; L-histidine from 5-phospho-alpha-D-ribose 1-diphosphate: step 6/9. This chain is Imidazoleglycerol-phosphate dehydratase, found in Rhodococcus erythropolis (strain PR4 / NBRC 100887).